The chain runs to 292 residues: Homoserine kinase (292 aa).

Position 81 to 91 (81 to 91 (RPKSGLGSSGA)) interacts with ATP.

The protein belongs to the GHMP kinase family. Homoserine kinase subfamily.

Its subcellular location is the cytoplasm. The enzyme catalyses L-homoserine + ATP = O-phospho-L-homoserine + ADP + H(+). Its pathway is amino-acid biosynthesis; L-threonine biosynthesis; L-threonine from L-aspartate: step 4/5. Its function is as follows. Catalyzes the ATP-dependent phosphorylation of L-homoserine to L-homoserine phosphate. The polypeptide is Homoserine kinase (Pyrococcus furiosus (strain ATCC 43587 / DSM 3638 / JCM 8422 / Vc1)).